The chain runs to 354 residues: Guanine nucleotide-binding protein G(o) subunit alpha (354 aa).

Glycine 2 is lipidated: N-myristoyl glycine. A lipid anchor (S-palmitoyl cysteine) is attached at cysteine 3. The G-alpha domain maps to 32–354 (KDVKLLLLGA…ANNLRGCGLY (323 aa)). Residues 35–48 (KLLLLGAGESGKST) are G1 motif. The GTP site is built by glutamate 43, lysine 46, serine 47, threonine 48, serine 152, leucine 176, arginine 177, threonine 178, and arginine 179. A Mg(2+)-binding site is contributed by serine 47. Residues 174–182 (DILRTRVKT) are G2 motif. A Mg(2+)-binding site is contributed by threonine 182. The interval 197–206 (FRLFDVGGQR) is G3 motif. Position 205 is a 5-glutamyl histamine (glutamine 205). The G4 motif stretch occupies residues 266–273 (ILFLNKKD). Residues asparagine 270, aspartate 273, and cysteine 325 each contribute to the GTP site. The interval 324-329 (TCATDT) is G5 motif. Cysteine 351 is lipidated: S-palmitoyl cysteine.

It belongs to the G-alpha family. G(i/o/t/z) subfamily. In terms of assembly, g proteins are composed of 3 units; alpha, beta and gamma. The alpha chain contains the guanine nucleotide binding site. Forms a complex with GNB1 and GNG3. Interacts with RGS14. Interacts with RGS16. Interacts with RGS19. Interacts (when palmitoylated) with ADGRG3. Post-translationally, histaminylated at Gln-205 residues by TGM2.

Its subcellular location is the cell membrane. The protein resides in the membrane. It catalyses the reaction GTP + H2O = GDP + phosphate + H(+). With respect to regulation, the GTPase activity is promoted by GTPAse activators, such as RGS14, RGS16 and RGS19. Its function is as follows. Guanine nucleotide-binding proteins (G proteins) function as transducers downstream of G protein-coupled receptors (GPCRs) in numerous signaling cascades. The alpha chain contains the guanine nucleotide binding site and alternates between an active, GTP-bound state and an inactive, GDP-bound state. Signaling by an activated GPCR promotes GDP release and GTP binding. The alpha subunit has a low GTPase activity that converts bound GTP to GDP, thereby terminating the signal. Both GDP release and GTP hydrolysis are modulated by numerous regulatory proteins. Signaling is mediated via effector proteins, such as adenylate cyclase. Inhibits adenylate cyclase activity, leading to decreased intracellular cAMP levels. The protein is Guanine nucleotide-binding protein G(o) subunit alpha (GNAO1) of Bos taurus (Bovine).